The chain runs to 104 residues: Pole-localizer protein TmaR (104 aa).

Coiled-coil stretches lie at residues 7–34 (IVNQARRKNKLKRELLDNEKKVRDNRKR) and 76–96 (SAEISKARRDISRRIRELTEE).

It belongs to the pole-localizer TmaR family.

It is found in the cytoplasm. Functionally, pole-localizer protein involved in the regulation of several cellular processes. The polypeptide is Pole-localizer protein TmaR (Vibrio atlanticus (strain LGP32) (Vibrio splendidus (strain Mel32))).